A 228-amino-acid polypeptide reads, in one-letter code: Protein GrpE (228 aa).

2 disordered regions span residues 1–31 (MADE…NRAA) and 209–228 (GVSK…EGNG).

It belongs to the GrpE family. As to quaternary structure, homodimer.

The protein localises to the cytoplasm. Its function is as follows. Participates actively in the response to hyperosmotic and heat shock by preventing the aggregation of stress-denatured proteins, in association with DnaK and GrpE. It is the nucleotide exchange factor for DnaK and may function as a thermosensor. Unfolded proteins bind initially to DnaJ; upon interaction with the DnaJ-bound protein, DnaK hydrolyzes its bound ATP, resulting in the formation of a stable complex. GrpE releases ADP from DnaK; ATP binding to DnaK triggers the release of the substrate protein, thus completing the reaction cycle. Several rounds of ATP-dependent interactions between DnaJ, DnaK and GrpE are required for fully efficient folding. The protein is Protein GrpE of Brucella anthropi (strain ATCC 49188 / DSM 6882 / CCUG 24695 / JCM 21032 / LMG 3331 / NBRC 15819 / NCTC 12168 / Alc 37) (Ochrobactrum anthropi).